A 481-amino-acid chain; its full sequence is tRNA-2-methylthio-N(6)-dimethylallyladenosine synthase (481 aa).

An MTTase N-terminal domain is found at 24-140; sequence KKLFIESYGC…LPNLLNEVEE (117 aa). The [4Fe-4S] cluster site is built by Cys-33, Cys-69, Cys-103, Cys-178, Cys-182, and Cys-185. Residues 164 to 411 enclose the Radical SAM core domain; that stretch reads MSNGITALVA…DLQQKHAWWR (248 aa). Residues 413–476 form the TRAM domain; it reads EDFIGQTVEV…SGTLKGEAVG (64 aa).

Belongs to the methylthiotransferase family. MiaB subfamily. In terms of assembly, monomer. [4Fe-4S] cluster serves as cofactor.

The protein resides in the cytoplasm. It catalyses the reaction N(6)-dimethylallyladenosine(37) in tRNA + (sulfur carrier)-SH + AH2 + 2 S-adenosyl-L-methionine = 2-methylsulfanyl-N(6)-dimethylallyladenosine(37) in tRNA + (sulfur carrier)-H + 5'-deoxyadenosine + L-methionine + A + S-adenosyl-L-homocysteine + 2 H(+). Catalyzes the methylthiolation of N6-(dimethylallyl)adenosine (i(6)A), leading to the formation of 2-methylthio-N6-(dimethylallyl)adenosine (ms(2)i(6)A) at position 37 in tRNAs that read codons beginning with uridine. This Flavobacterium psychrophilum (strain ATCC 49511 / DSM 21280 / CIP 103535 / JIP02/86) protein is tRNA-2-methylthio-N(6)-dimethylallyladenosine synthase.